Reading from the N-terminus, the 198-residue chain is Ribonuclease HII (198 aa).

The RNase H type-2 domain maps to 10–198 (QLVAGVDEVG…PVKRALGLAS (189 aa)). A divalent metal cation contacts are provided by D16, E17, and D108.

The protein belongs to the RNase HII family. It depends on Mn(2+) as a cofactor. Mg(2+) serves as cofactor.

Its subcellular location is the cytoplasm. It catalyses the reaction Endonucleolytic cleavage to 5'-phosphomonoester.. Endonuclease that specifically degrades the RNA of RNA-DNA hybrids. This chain is Ribonuclease HII, found in Escherichia coli O6:H1 (strain CFT073 / ATCC 700928 / UPEC).